A 186-amino-acid chain; its full sequence is Tegument protein UL55 (186 aa).

Belongs to the alphaherpesvirinae HHV-1 UL55 family.

Its subcellular location is the virion tegument. It is found in the host nucleus matrix. The protein is Tegument protein UL55 of Homo sapiens (Human).